A 250-amino-acid polypeptide reads, in one-letter code: Small ribosomal subunit protein uS5 (250 aa).

A compositionally biased stretch (polar residues) spans 1-22 (MNVVETSSEMNSNVEKASTPKQ). Residues 1 to 40 (MNVVETSSEMNSNVEKASTPKQENNKRFERKSRPSSRQKV) are disordered. In terms of domain architecture, S5 DRBM spans 45–108 (FEEKVVTIRR…KEAKKNLVSV (64 aa)).

Belongs to the universal ribosomal protein uS5 family. In terms of assembly, part of the 30S ribosomal subunit. Contacts proteins S4 and S8.

In terms of biological role, with S4 and S12 plays an important role in translational accuracy. Located at the back of the 30S subunit body where it stabilizes the conformation of the head with respect to the body. This chain is Small ribosomal subunit protein uS5, found in Mycoplasma capricolum subsp. capricolum (strain California kid / ATCC 27343 / NCTC 10154).